Consider the following 299-residue polypeptide: ATP phosphoribosyltransferase (299 aa).

It belongs to the ATP phosphoribosyltransferase family. Long subfamily. In terms of assembly, equilibrium between an active dimeric form, an inactive hexameric form and higher aggregates. Interconversion between the various forms is largely reversible and is influenced by the natural substrates and inhibitors of the enzyme. It depends on Mg(2+) as a cofactor.

The protein resides in the cytoplasm. It catalyses the reaction 1-(5-phospho-beta-D-ribosyl)-ATP + diphosphate = 5-phospho-alpha-D-ribose 1-diphosphate + ATP. It participates in amino-acid biosynthesis; L-histidine biosynthesis; L-histidine from 5-phospho-alpha-D-ribose 1-diphosphate: step 1/9. Feedback inhibited by histidine. Catalyzes the condensation of ATP and 5-phosphoribose 1-diphosphate to form N'-(5'-phosphoribosyl)-ATP (PR-ATP). Has a crucial role in the pathway because the rate of histidine biosynthesis seems to be controlled primarily by regulation of HisG enzymatic activity. The polypeptide is ATP phosphoribosyltransferase (Buchnera aphidicola subsp. Acyrthosiphon pisum (strain 5A)).